The sequence spans 370 residues: 3-dehydroquinate synthase (370 aa).

NAD(+) contacts are provided by residues glycine 108–aspartate 112, threonine 132–threonine 133, lysine 145, and lysine 154. The Zn(2+) site is built by glutamate 187, histidine 249, and histidine 267.

It belongs to the sugar phosphate cyclases superfamily. Dehydroquinate synthase family. Co(2+) serves as cofactor. It depends on Zn(2+) as a cofactor. Requires NAD(+) as cofactor.

Its subcellular location is the cytoplasm. The catalysed reaction is 7-phospho-2-dehydro-3-deoxy-D-arabino-heptonate = 3-dehydroquinate + phosphate. The protein operates within metabolic intermediate biosynthesis; chorismate biosynthesis; chorismate from D-erythrose 4-phosphate and phosphoenolpyruvate: step 2/7. In terms of biological role, catalyzes the conversion of 3-deoxy-D-arabino-heptulosonate 7-phosphate (DAHP) to dehydroquinate (DHQ). The protein is 3-dehydroquinate synthase of Cereibacter sphaeroides (strain ATCC 17023 / DSM 158 / JCM 6121 / CCUG 31486 / LMG 2827 / NBRC 12203 / NCIMB 8253 / ATH 2.4.1.) (Rhodobacter sphaeroides).